A 155-amino-acid polypeptide reads, in one-letter code: MNIKTIEGNLSAKDSKFAIVTSRFNDFIGGRLVEGALDCIVRHDGSEENIAIYKCPGAFEVPMVAKKLAQSGKWDAVIAIGVLIRGATAHFDYIAAEATKGIAQASLECGVPISFGVLTTDTIEQAIERAGTKAGNKGWDAASAAIEMVNLYKQM.

5-amino-6-(D-ribitylamino)uracil contacts are provided by residues phenylalanine 24, 58-60 (AFE), and 82-84 (VLI). 87–88 (AT) is a (2S)-2-hydroxy-3-oxobutyl phosphate binding site. Histidine 90 functions as the Proton donor in the catalytic mechanism. Position 115 (phenylalanine 115) interacts with 5-amino-6-(D-ribitylamino)uracil. Arginine 129 is a (2S)-2-hydroxy-3-oxobutyl phosphate binding site.

Belongs to the DMRL synthase family.

The enzyme catalyses (2S)-2-hydroxy-3-oxobutyl phosphate + 5-amino-6-(D-ribitylamino)uracil = 6,7-dimethyl-8-(1-D-ribityl)lumazine + phosphate + 2 H2O + H(+). It functions in the pathway cofactor biosynthesis; riboflavin biosynthesis; riboflavin from 2-hydroxy-3-oxobutyl phosphate and 5-amino-6-(D-ribitylamino)uracil: step 1/2. Its function is as follows. Catalyzes the formation of 6,7-dimethyl-8-ribityllumazine by condensation of 5-amino-6-(D-ribitylamino)uracil with 3,4-dihydroxy-2-butanone 4-phosphate. This is the penultimate step in the biosynthesis of riboflavin. The polypeptide is 6,7-dimethyl-8-ribityllumazine synthase (Chloroherpeton thalassium (strain ATCC 35110 / GB-78)).